The chain runs to 484 residues: Protein nucleotidyltransferase YdiU (484 aa).

Residues Gly-81, Gly-83, Arg-84, Lys-103, Asp-115, Gly-116, Arg-166, and Arg-173 each contribute to the ATP site. The active-site Proton acceptor is Asp-244. Positions 245 and 254 each coordinate Mg(2+). Asp-254 contacts ATP.

This sequence belongs to the SELO family. Requires Mg(2+) as cofactor. Mn(2+) serves as cofactor.

The enzyme catalyses L-seryl-[protein] + ATP = 3-O-(5'-adenylyl)-L-seryl-[protein] + diphosphate. It catalyses the reaction L-threonyl-[protein] + ATP = 3-O-(5'-adenylyl)-L-threonyl-[protein] + diphosphate. The catalysed reaction is L-tyrosyl-[protein] + ATP = O-(5'-adenylyl)-L-tyrosyl-[protein] + diphosphate. It carries out the reaction L-histidyl-[protein] + UTP = N(tele)-(5'-uridylyl)-L-histidyl-[protein] + diphosphate. The enzyme catalyses L-seryl-[protein] + UTP = O-(5'-uridylyl)-L-seryl-[protein] + diphosphate. It catalyses the reaction L-tyrosyl-[protein] + UTP = O-(5'-uridylyl)-L-tyrosyl-[protein] + diphosphate. Nucleotidyltransferase involved in the post-translational modification of proteins. It can catalyze the addition of adenosine monophosphate (AMP) or uridine monophosphate (UMP) to a protein, resulting in modifications known as AMPylation and UMPylation. The polypeptide is Protein nucleotidyltransferase YdiU (Shewanella oneidensis (strain ATCC 700550 / JCM 31522 / CIP 106686 / LMG 19005 / NCIMB 14063 / MR-1)).